The sequence spans 321 residues: Small ribosomal subunit protein mS43 (321 aa).

A mitochondrion-targeting transit peptide spans 1–13 (MLRFTGARAIRKY).

This sequence belongs to the mitochondrion-specific ribosomal protein mS43 family. As to quaternary structure, component of the mitochondrial small ribosomal subunit (mt-SSU). Mature yeast 74S mitochondrial ribosomes consist of a small (37S) and a large (54S) subunit. The 37S small subunit contains a 15S ribosomal RNA (15S mt-rRNA) and 34 different proteins. The 54S large subunit contains a 21S rRNA (21S mt-rRNA) and 46 different proteins. mS43 forms a heterodimer with mS42, building a large protuberance adjacent to the mRNA channel exit in the mt-SSU body.

The protein localises to the mitochondrion. In terms of biological role, component of the mitochondrial ribosome (mitoribosome), a dedicated translation machinery responsible for the synthesis of mitochondrial genome-encoded proteins, including at least some of the essential transmembrane subunits of the mitochondrial respiratory chain. The mitoribosomes are attached to the mitochondrial inner membrane and translation products are cotranslationally integrated into the membrane. This chain is Small ribosomal subunit protein mS43 (MRP1), found in Saccharomyces cerevisiae (strain ATCC 204508 / S288c) (Baker's yeast).